Here is a 290-residue protein sequence, read N- to C-terminus: MKKKALLPLFLGIMVFLAGCDYSKPEKRSGFFYNTFVDPMKNVLDWLGNNLLNDNYGLAIIILVLVIRIILLPFMLSNYKNSHMMRQKMKVAKPEVEKIQEKVKRARTQEEKMAANQELMQVYKKYDMNPIKSMLGCLPMLIQLPIIMGLYFVLKDQLVDGLFKYPHFLWFDLGRPDIWITIIAGVLYFIQAYVSSKTMPDEQRQMGYMMMVISPIMIIWISLSSASALGLYWSVSAAFLVVQTHFANIYYEKVAKKEVQPFIEAYEREHNGGSNKKGKNTQVVSKKKKK.

The first 19 residues, 1-19, serve as a signal peptide directing secretion; the sequence is MKKKALLPLFLGIMVFLAG. Residue Cys20 is the site of N-palmitoyl cysteine attachment. Cys20 carries S-diacylglycerol cysteine lipidation. 5 consecutive transmembrane segments (helical) span residues 56–76, 134–154, 176–196, 207–224, and 229–251; these read YGLA…PFML, MLGC…YFVL, PDIW…YVSS, GYMM…ISLS, and LGLY…NIYY. Residues 270–290 are disordered; it reads HNGGSNKKGKNTQVVSKKKKK.

It belongs to the OXA1/ALB3/YidC family. Type 2 subfamily.

It localises to the cell membrane. Its function is as follows. Required for the insertion and/or proper folding and/or complex formation of integral membrane proteins into the membrane. Involved in integration of membrane proteins that insert both dependently and independently of the Sec translocase complex, as well as at least some lipoproteins. This chain is Membrane protein insertase YidC, found in Staphylococcus aureus (strain Mu3 / ATCC 700698).